The primary structure comprises 249 residues: (S)-1-Phenylethanol dehydrogenase (249 aa).

Residues 17 to 19, Asp38, 61 to 63, Asn89, and Tyr93 contribute to the NAD(+) site; these read NGI and CDV. Ser141 is a binding site for substrate. Catalysis depends on Tyr154, which acts as the Proton acceptor. NAD(+)-binding positions include Lys158, 184-187, and Thr191; that span reads PSLV.

Belongs to the short-chain dehydrogenases/reductases (SDR) family. Homotetramer.

The catalysed reaction is (S)-1-phenylethanol + NAD(+) = acetophenone + NADH + H(+). Its function is as follows. Catalyzes the NAD-dependent stereospecific oxidation of (S)-1-phenylethanol to acetophenone in the degradation of ethylbenzene. The polypeptide is (S)-1-Phenylethanol dehydrogenase (ped) (Aromatoleum aromaticum (strain DSM 19018 / LMG 30748 / EbN1) (Azoarcus sp. (strain EbN1))).